The primary structure comprises 389 residues: tRNA (guanine-N(7)-)-methyltransferase non-catalytic subunit TRM82 (389 aa).

WD repeat units lie at residues 44 to 86, 134 to 179, and 184 to 222; these read QNVP…HQLK, GHTS…KGFL, and QFVSQIHLFEICKESRLVSGGGEGKLFFWDWFREVLITE.

Belongs to the WD repeat TRM82 family. In terms of assembly, forms a heterodimer with the catalytic subunit TRM8.

It is found in the nucleus. The protein operates within tRNA modification; N(7)-methylguanine-tRNA biosynthesis. In terms of biological role, required for the formation of N(7)-methylguanine at position 46 (m7G46) in tRNA. In the complex, it is required to stabilize and induce conformational changes of the catalytic subunit. The chain is tRNA (guanine-N(7)-)-methyltransferase non-catalytic subunit TRM82 from Lodderomyces elongisporus (strain ATCC 11503 / CBS 2605 / JCM 1781 / NBRC 1676 / NRRL YB-4239) (Yeast).